A 106-amino-acid polypeptide reads, in one-letter code: Nucleoid-associated protein Smlt1015 (106 aa).

Residues 81–106 (IDAESKSKMGSATAGMQLPPGMKLPF) form a disordered region.

The protein belongs to the YbaB/EbfC family. In terms of assembly, homodimer.

The protein localises to the cytoplasm. Its subcellular location is the nucleoid. In terms of biological role, binds to DNA and alters its conformation. May be involved in regulation of gene expression, nucleoid organization and DNA protection. This chain is Nucleoid-associated protein Smlt1015, found in Stenotrophomonas maltophilia (strain K279a).